Here is a 37-residue protein sequence, read N- to C-terminus: Large ribosomal subunit protein bL36 (37 aa).

It belongs to the bacterial ribosomal protein bL36 family.

This is Large ribosomal subunit protein bL36 from Acidovorax ebreus (strain TPSY) (Diaphorobacter sp. (strain TPSY)).